Reading from the N-terminus, the 202-residue chain is Flagellar transcriptional regulator FlhC (202 aa).

Zn(2+) is bound by residues C137, C140, C157, and C160.

Belongs to the FlhC family. Heterohexamer composed of two FlhC and four FlhD subunits. Each FlhC binds a FlhD dimer, forming a heterotrimer, and a hexamer assembles by dimerization of two heterotrimers. Zn(2+) serves as cofactor.

It localises to the cytoplasm. In terms of biological role, functions in complex with FlhD as a master transcriptional regulator that regulates transcription of several flagellar and non-flagellar operons by binding to their promoter region. Activates expression of class 2 flagellar genes, including fliA, which is a flagellum-specific sigma factor that turns on the class 3 genes. Also regulates genes whose products function in a variety of physiological pathways. This chain is Flagellar transcriptional regulator FlhC, found in Variovorax paradoxus (strain S110).